The sequence spans 151 residues: Small ribosomal subunit protein uS19 (151 aa).

The disordered stretch occupies residues 1–23 (MVVNKQGSVKSIKRKARKSRKVT). Residues 11-23 (SIKRKARKSRKVT) are compositionally biased toward basic residues.

It belongs to the universal ribosomal protein uS19 family.

Its function is as follows. Protein S19 forms a complex with S13 that binds strongly to the 16S ribosomal RNA. This chain is Small ribosomal subunit protein uS19 (rps19), found in Thermoplasma volcanium (strain ATCC 51530 / DSM 4299 / JCM 9571 / NBRC 15438 / GSS1).